A 224-amino-acid chain; its full sequence is Cytidylate kinase (224 aa).

ATP is bound at residue 11–19; sequence GPAAAGKST.

It belongs to the cytidylate kinase family. Type 1 subfamily.

It is found in the cytoplasm. It catalyses the reaction CMP + ATP = CDP + ADP. The enzyme catalyses dCMP + ATP = dCDP + ADP. The polypeptide is Cytidylate kinase (Listeria welshimeri serovar 6b (strain ATCC 35897 / DSM 20650 / CCUG 15529 / CIP 8149 / NCTC 11857 / SLCC 5334 / V8)).